We begin with the raw amino-acid sequence, 66 residues long: Large ribosomal subunit protein bL35 (66 aa).

This sequence belongs to the bacterial ribosomal protein bL35 family. In terms of assembly, part of the 50S ribosomal subunit. Contacts proteins L15 and L33.

Its function is as follows. Binds the 23S rRNA. The sequence is that of Large ribosomal subunit protein bL35 (rpmI) from Deinococcus radiodurans (strain ATCC 13939 / DSM 20539 / JCM 16871 / CCUG 27074 / LMG 4051 / NBRC 15346 / NCIMB 9279 / VKM B-1422 / R1).